Reading from the N-terminus, the 335-residue chain is Rho guanine nucleotide exchange factor 39 (335 aa).

The DH domain maps to 22 to 197 (KRACTARELL…SETAQRVHTI (176 aa)). Positions 227–331 (WFLRQGWLLV…WYHSLTWAIS (105 aa)) constitute a PH domain.

As to expression, strongly expressed in hepatocellular carcinoma (HCC) compared with their non-cancerous counterparts.

The protein resides in the cell membrane. Its function is as follows. Promotes cell proliferation. The sequence is that of Rho guanine nucleotide exchange factor 39 (ARHGEF39) from Homo sapiens (Human).